We begin with the raw amino-acid sequence, 357 residues long: Alanine racemase (357 aa).

The Proton acceptor; specific for D-alanine role is filled by Lys-33. Lys-33 carries the post-translational modification N6-(pyridoxal phosphate)lysine. Arg-129 contributes to the substrate binding site. The active-site Proton acceptor; specific for L-alanine is Tyr-253. Met-301 provides a ligand contact to substrate.

Belongs to the alanine racemase family. It depends on pyridoxal 5'-phosphate as a cofactor.

It catalyses the reaction L-alanine = D-alanine. It participates in amino-acid biosynthesis; D-alanine biosynthesis; D-alanine from L-alanine: step 1/1. Its function is as follows. Catalyzes the interconversion of L-alanine and D-alanine. May also act on other amino acids. This is Alanine racemase (alr) from Pseudomonas entomophila (strain L48).